Reading from the N-terminus, the 899-residue chain is MTTDIVTSRINFYPYTVLPSAKPVYQYDLSIQVSTQGYNLDNADSYRALEKFCEQQDTALGNDPARSLFYSLIVDFPSSDSRPISSFYSQTDLGSRPVTHTVEFLSTQKPKRRGGRAGGMRGNRGGPSTTSVQALVKVTRVRQMDPLDLMSMKTLLNILLRRTFESSLGMLNIRSGFYDLNRTSTHNIQVDGRGFDICWIPGFRLTTATLYGKLGLQVLPETTKVRSKSMCELLNENRGSLHPNALAAITVMAMHNGRVFRIHSIVRGQSVVSPLAEGSDTDYFTYYSAKYKDKIDSAALSLLKQDDYCNSVLQRDKFILKLTPLKKTHNGKVVRSCNVPSSLCIIISDNEIAPYGVSKLSTNKTAVALSTMSPDALLEKATEFANQLIDNAELQSVLGDYGFRFTSQPLELDTFVCKPPKLMMDTLSRELTVEDDSGGVFRSLIQSPGVSSIYYANNGQPAVGMPHWALMVPRYLKNDYARRLKQELTQRIRSLAGATASTVEEPLLIAVDVNEQRRDMYRIEPYKDAFESLLVKLNTQYPDTKNSELISRIQLVVVVIPGPKQYSGGLYKEVKRFYTDKGIVTQCLLTPRLSRDGPEWYDQAILNGLCQQIYAKAGGAVWAPALPKDNAYSTSTMLCALDVSRPKKTVGRPTEVPASTAGFISTYEGSFEYIYSQKKNLMPNRLNQGGEVQQQTLMKTFIKNSCEVYSAFNSSLPDRIVIFRDGVSDGQISTVLETEINSLYEYLCQRYREANRPMCDLKVIVAQKTCAMRLAAVSNTDLRPGFYILNHSPDNKQKGSEFIMASQAIVHGTTPKPIRYKLIFDSTEASMDNSSFKQLIELTNTMAYGYVNWPQAISLPHILHMAHLLSKFCGEILGNGRDLLESQAIFGLQYRPFFI.

A disordered region spans residues 107 to 129; it reads TQKPKRRGGRAGGMRGNRGGPST. Residues 116-125 are compositionally biased toward gly residues; sequence RAGGMRGNRG. In terms of domain architecture, PAZ spans 229–313; sequence SMCELLNENR…KQDDYCNSVL (85 aa). Residues 555–878 form the Piwi domain; that stretch reads LVVVVIPGPK…LSKFCGEILG (324 aa).

Belongs to the argonaute family. Ago subfamily. Interacts with miR2. Highly specific binding to the mRNA m7G-cap. May be a component of the RNA-induced silencing complex (RISC), a sequence-specific, multicomponent nuclease that destroys or silences messenger RNAs homologous to the silencing trigger.

Its subcellular location is the cytoplasm. In terms of biological role, plays an essential role in growth and, with Dicer, also involved in microRNA (miRNA)-mediated translational repression. The RNA interference pathway is implicated in antigenic variation having a role in regulation of variant-specific surface protein (VSP)-coding gene expression. Several VSP genes are transcribed but only transcripts encoding the VSP to be expressed accumulate. Antisense RNAs corresponding to the silenced VSP genes are detected. In Giardia intestinalis (strain ATCC 50581 / GS clone H7) (Giardia lamblia), this protein is Protein argonaute.